Consider the following 155-residue polypeptide: 2-C-methyl-D-erythritol 2,4-cyclodiphosphate synthase (155 aa).

Residues D8 and H10 each coordinate a divalent metal cation. 4-CDP-2-C-methyl-D-erythritol 2-phosphate is bound by residues 8–10 and 34–35; these read DVH and HS. H42 contributes to the a divalent metal cation binding site. Residues 56–58, 61–65, 100–106, 132–135, F139, and K142 each bind 4-CDP-2-C-methyl-D-erythritol 2-phosphate; these read DIG, FPDSD, AQKPKML, and TTEE.

The protein belongs to the IspF family. In terms of assembly, homotrimer. A divalent metal cation serves as cofactor.

The catalysed reaction is 4-CDP-2-C-methyl-D-erythritol 2-phosphate = 2-C-methyl-D-erythritol 2,4-cyclic diphosphate + CMP. It functions in the pathway isoprenoid biosynthesis; isopentenyl diphosphate biosynthesis via DXP pathway; isopentenyl diphosphate from 1-deoxy-D-xylulose 5-phosphate: step 4/6. Involved in the biosynthesis of isopentenyl diphosphate (IPP) and dimethylallyl diphosphate (DMAPP), two major building blocks of isoprenoid compounds. Catalyzes the conversion of 4-diphosphocytidyl-2-C-methyl-D-erythritol 2-phosphate (CDP-ME2P) to 2-C-methyl-D-erythritol 2,4-cyclodiphosphate (ME-CPP) with a corresponding release of cytidine 5-monophosphate (CMP). The polypeptide is 2-C-methyl-D-erythritol 2,4-cyclodiphosphate synthase (Clostridium botulinum (strain 657 / Type Ba4)).